The primary structure comprises 141 residues: Mite group 2 allergen Lep d 2 (141 aa).

An N-terminal signal peptide occupies residues 1–16 (MMKFIALFALVAVASA). Cystine bridges form between C24–C133, C37–C42, and C88–C93. A run of 3 repeats spans residues 64–65 (KV), 68–69 (KV), and 72–73 (KV). The 3 X 2 AA repeats of K-V stretch occupies residues 64–73 (KVTIKVLAKV).

The protein belongs to the NPC2 family. Monomer.

The protein resides in the secreted. The polypeptide is Mite group 2 allergen Lep d 2 (Lepidoglyphus destructor (Storage mite)).